Consider the following 393-residue polypeptide: E3 ubiquitin-protein transferase RMND5B (393 aa).

Residue M1 is modified to N-acetylmethionine. The 33-residue stretch at 116–148 folds into the LisH domain; the sequence is QQQILQMAIVEHLYQQGMLSVAEELCQESTLNV. The CTLH domain maps to 155 to 212; the sequence is PFLELNRILEALHEQDLGPALEWAVSHRQRLLELNSSLEFKLHRLHFIRLLAGGPAKQ. The segment at 338-379 adopts an RING-Gid-type zinc-finger fold; sequence CPILRQQTSDSNPPIKLICGHVISRDALNKLINGGKLKCPYC.

Identified in the CTLH complex that contains GID4, RANBP9 and/or RANBP10, MKLN1, MAEA, RMND5A (or alternatively its paralog RMND5B), GID8, ARMC8, WDR26 and YPEL5. Within this complex, MAEA, RMND5A (or alternatively its paralog RMND5B), GID8, WDR26, and RANBP9 and/or RANBP10 form the catalytic core, while GID4, MKLN1, ARMC8 and YPEL5 have ancillary roles.

Its subcellular location is the cytoplasm. It localises to the cytosol. The enzyme catalyses S-ubiquitinyl-[E2 ubiquitin-conjugating enzyme]-L-cysteine + [acceptor protein]-L-lysine = [E2 ubiquitin-conjugating enzyme]-L-cysteine + N(6)-ubiquitinyl-[acceptor protein]-L-lysine.. Core component of the CTLH E3 ubiquitin-protein ligase complex that selectively accepts ubiquitin from UBE2H and mediates ubiquitination and subsequent proteasomal degradation of the transcription factor HBP1. MAEA and RMND5A are both required for catalytic activity of the CTLH E3 ubiquitin-protein ligase complex. Catalytic activity of the complex is required for normal cell proliferation. The CTLH E3 ubiquitin-protein ligase complex is not required for the degradation of enzymes involved in gluconeogenesis, such as FBP1. The polypeptide is E3 ubiquitin-protein transferase RMND5B (RMND5B) (Homo sapiens (Human)).